The sequence spans 229 residues: Large ribosomal subunit protein uL1 (229 aa).

The protein belongs to the universal ribosomal protein uL1 family. In terms of assembly, part of the 50S ribosomal subunit.

Functionally, binds directly to 23S rRNA. The L1 stalk is quite mobile in the ribosome, and is involved in E site tRNA release. Its function is as follows. Protein L1 is also a translational repressor protein, it controls the translation of the L11 operon by binding to its mRNA. This chain is Large ribosomal subunit protein uL1, found in Leifsonia xyli subsp. xyli (strain CTCB07).